We begin with the raw amino-acid sequence, 99 residues long: Accessory protein p12I (99 aa).

Residues 4-11 (RLLSPLSP) carry the SH3-binding motif. The helical transmembrane segment at 12-32 (LALTALLLFLLSPGEVSGLLL) threads the bilayer. The SH3-binding signature appears at 33–38 (RPLPAP). Residues 48–68 (ILSNLLFLLFLPLFFSLPLLL) traverse the membrane as a helical segment. 2 consecutive short sequence motifs (SH3-binding) follow at residues 70–77 (PSLPITMR) and 88–93 (RAPSQP).

It belongs to the HTLV-1 accessory protein p12I family. P12I is a homodimer. Interacts with human CANX, CALR, ATP6V0C, IL2RB, IL2RG. Binds to MHC-I heavy chains HLA-A2, HLA-B7 and HLA-Cw4. Post-translationally, ubiquitinated; a fraction of P12I is degraded via the ubiquitin system.

The protein localises to the host endoplasmic reticulum membrane. It is found in the host Golgi apparatus. The protein resides in the host cis-Golgi network membrane. In terms of biological role, p12I is a modulator of T-lymphocyte proliferation and immune function and may contribute to establish a persistent infection. Binds and down-modulates cell surface expression of interleukin-2 receptors IL2RB and IL2RG. Also down-modulates cell surface MHC-I molecules by binding to free immature MHC-I heavy chains in the ER and targeting them to the proteasome for degradation. Binding to IL2RB mediates recruitment of JAK1 and JAK3. As a result of this interaction, p12I increases DNA-binding and transcriptional activity of STAT5. The protein is Accessory protein p12I of Homo sapiens (Human).